Reading from the N-terminus, the 622-residue chain is Pyranose 2-oxidase (622 aa).

Residues 1-28 (MSASSSDPFHSFAKTSFTSKAAKRATAH) form the signal peptide. A propeptide spanning residues 29 to 37 (SLPPLPGPG) is cleaved from the precursor. Position 167 is a tele-8alpha-FAD histidine (His167). Substrate-binding residues include Gln449 and His451. His546 functions as the Proton acceptor in the catalytic mechanism. Residue Asn591 is part of the active site.

The protein belongs to the GMC oxidoreductase family. In terms of assembly, homotetramer. It depends on FAD as a cofactor. Not glycosylated.

It localises to the periplasm. It carries out the reaction D-glucose + O2 = 2-dehydro-D-glucose + H2O2. Its function is as follows. Catalyzes the oxidation of various aldopyranoses and disaccharides on carbon-2 to the corresponding 2-keto sugars concomitant with the reduction of O(2) to H(2)O(2). Plays an important role in lignin degradation of wood rot fungi by supplying the essential cosubstrate H(2)O(2) for the ligninolytic peroxidases, lignin peroxidase and manganese-dependent peroxidase. The preferred substrate is D-glucose which is converted to 2-dehydro-D-glucose, an intermediate of a secondary metabolic pathway leading to the antibiotic cortalcerone. Also acts on D-xylose, together with D-glucose the major sugars derived from wood, on L-sorbose, D-galactose and 1,5-anhydroglucitol, a diagnostic marker of diabetes mellitus. This Phlebiopsis gigantea (White-rot fungus) protein is Pyranose 2-oxidase (p2ox).